We begin with the raw amino-acid sequence, 510 residues long: Lysine--tRNA ligase (510 aa).

Mg(2+)-binding residues include E420 and E427.

The protein belongs to the class-II aminoacyl-tRNA synthetase family. As to quaternary structure, homodimer. Mg(2+) serves as cofactor.

It localises to the cytoplasm. The enzyme catalyses tRNA(Lys) + L-lysine + ATP = L-lysyl-tRNA(Lys) + AMP + diphosphate. This chain is Lysine--tRNA ligase (lysS), found in Vibrio cholerae serotype O1 (strain ATCC 39315 / El Tor Inaba N16961).